Consider the following 274-residue polypeptide: 2-dehydro-3-deoxyphosphooctonate aldolase (274 aa).

The protein belongs to the KdsA family.

It is found in the cytoplasm. The enzyme catalyses D-arabinose 5-phosphate + phosphoenolpyruvate + H2O = 3-deoxy-alpha-D-manno-2-octulosonate-8-phosphate + phosphate. The protein operates within carbohydrate biosynthesis; 3-deoxy-D-manno-octulosonate biosynthesis; 3-deoxy-D-manno-octulosonate from D-ribulose 5-phosphate: step 2/3. It participates in bacterial outer membrane biogenesis; lipopolysaccharide biosynthesis. This Rickettsia rickettsii (strain Iowa) protein is 2-dehydro-3-deoxyphosphooctonate aldolase.